Reading from the N-terminus, the 261-residue chain is Glutamate racemase (261 aa).

Residues 12 to 13 and 44 to 45 contribute to the substrate site; these read DS and YG. Cys-76 acts as the Proton donor/acceptor in catalysis. Substrate is bound at residue 77–78; sequence NT. Cys-180 functions as the Proton donor/acceptor in the catalytic mechanism. 181–182 provides a ligand contact to substrate; it reads TH.

Belongs to the aspartate/glutamate racemases family.

The enzyme catalyses L-glutamate = D-glutamate. The protein operates within cell wall biogenesis; peptidoglycan biosynthesis. In terms of biological role, provides the (R)-glutamate required for cell wall biosynthesis. The sequence is that of Glutamate racemase from Borreliella burgdorferi (strain ATCC 35210 / DSM 4680 / CIP 102532 / B31) (Borrelia burgdorferi).